A 394-amino-acid chain; its full sequence is Mucosal addressin cell adhesion molecule 1 (394 aa).

Residues 1–19 (MEPILALLLALGPFQLSRG) form the signal peptide. 3 Ig-like domains span residues 20 to 107 (QSFQ…ILVY), 108 to 225 (AFPD…TSPE), and 256 to 345 (PSTP…YVTG). Residues 20 to 353 (QSFQVNPPEP…TGQVIPNPSS (334 aa)) lie on the Extracellular side of the membrane. The N-linked (GlcNAc...) asparagine glycan is linked to asparagine 42. Cystine bridges form between cysteine 43–cysteine 89, cysteine 47–cysteine 93, and cysteine 130–cysteine 198. The mucin-like stretch occupies residues 219–255 (QSQTSPEPPSTTSAKPYILTSSHTTKAVSTGLSSVAL). Cysteine 282 and cysteine 330 are joined by a disulfide. A helical membrane pass occupies residues 354–374 (MVALWIGSLVLGLLALAFLAY). The Cytoplasmic portion of the chain corresponds to 375 to 394 (CLWKRYRPGPLPDSSSCTLL).

Homodimer. In terms of tissue distribution, detected in Peyer patches and mesenteric lymph nodes but not in spleen.

The protein resides in the membrane. In terms of biological role, cell adhesion leukocyte receptor expressed by mucosal venules, helps to direct lymphocyte traffic into mucosal tissues including the Peyer patches and the intestinal lamina propria. It can bind both the integrin alpha-4/beta-7 and L-selectin, regulating both the passage and retention of leukocytes. The polypeptide is Mucosal addressin cell adhesion molecule 1 (Madcam1) (Rattus norvegicus (Rat)).